Reading from the N-terminus, the 212-residue chain is Uridine kinase (212 aa).

12-19 (GGSGGGKT) provides a ligand contact to ATP.

This sequence belongs to the uridine kinase family.

The protein resides in the cytoplasm. It carries out the reaction uridine + ATP = UMP + ADP + H(+). It catalyses the reaction cytidine + ATP = CMP + ADP + H(+). It participates in pyrimidine metabolism; CTP biosynthesis via salvage pathway; CTP from cytidine: step 1/3. It functions in the pathway pyrimidine metabolism; UMP biosynthesis via salvage pathway; UMP from uridine: step 1/1. In Streptococcus pneumoniae serotype 19F (strain G54), this protein is Uridine kinase.